Reading from the N-terminus, the 386-residue chain is Succinate--CoA ligase [ADP-forming] subunit beta (386 aa).

Residues Lys9–Glu244 form the ATP-grasp domain. ATP-binding positions include Lys46, Gly53–Gly55, Glu99, Cys102, and Glu107. Residues Asn199 and Asp213 each contribute to the Mg(2+) site. Substrate-binding positions include Asn264 and Gly320–Met322.

This sequence belongs to the succinate/malate CoA ligase beta subunit family. In terms of assembly, heterotetramer of two alpha and two beta subunits. Mg(2+) is required as a cofactor.

The catalysed reaction is succinate + ATP + CoA = succinyl-CoA + ADP + phosphate. The enzyme catalyses GTP + succinate + CoA = succinyl-CoA + GDP + phosphate. It functions in the pathway carbohydrate metabolism; tricarboxylic acid cycle; succinate from succinyl-CoA (ligase route): step 1/1. In terms of biological role, succinyl-CoA synthetase functions in the citric acid cycle (TCA), coupling the hydrolysis of succinyl-CoA to the synthesis of either ATP or GTP and thus represents the only step of substrate-level phosphorylation in the TCA. The beta subunit provides nucleotide specificity of the enzyme and binds the substrate succinate, while the binding sites for coenzyme A and phosphate are found in the alpha subunit. This Ehrlichia ruminantium (strain Welgevonden) protein is Succinate--CoA ligase [ADP-forming] subunit beta.